The chain runs to 442 residues: tRNA-2-methylthio-N(6)-dimethylallyladenosine synthase (442 aa).

The 118-residue stretch at 3–120 folds into the MTTase N-terminal domain; it reads NKLYIRTFGC…LPNMLNDALN (118 aa). Residues Cys12, Cys49, Cys83, Cys157, Cys161, and Cys164 each contribute to the [4Fe-4S] cluster site. The Radical SAM core domain occupies 143–375; the sequence is RTNSVTAFVS…QKTINNNTEH (233 aa). In terms of domain architecture, TRAM spans 378–440; the sequence is QLMIGSIQKV…GNSLMGDLLT (63 aa).

This sequence belongs to the methylthiotransferase family. MiaB subfamily. As to quaternary structure, monomer. The cofactor is [4Fe-4S] cluster.

The protein localises to the cytoplasm. It carries out the reaction N(6)-dimethylallyladenosine(37) in tRNA + (sulfur carrier)-SH + AH2 + 2 S-adenosyl-L-methionine = 2-methylsulfanyl-N(6)-dimethylallyladenosine(37) in tRNA + (sulfur carrier)-H + 5'-deoxyadenosine + L-methionine + A + S-adenosyl-L-homocysteine + 2 H(+). Functionally, catalyzes the methylthiolation of N6-(dimethylallyl)adenosine (i(6)A), leading to the formation of 2-methylthio-N6-(dimethylallyl)adenosine (ms(2)i(6)A) at position 37 in tRNAs that read codons beginning with uridine. This chain is tRNA-2-methylthio-N(6)-dimethylallyladenosine synthase, found in Vesicomyosocius okutanii subsp. Calyptogena okutanii (strain HA).